The sequence spans 544 residues: Methionine--tRNA ligase 1 (544 aa).

The short motif at 10-20 (PYANGSLHLGH) is the 'HIGH' region element. Residues Cys-141, Cys-144, Cys-153, and Cys-156 each contribute to the Zn(2+) site. A 'KMSKS' region motif is present at residues 329 to 333 (KLSTS). Thr-332 is an ATP binding site.

It belongs to the class-I aminoacyl-tRNA synthetase family. MetG type 1 subfamily. In terms of assembly, monomer. Zn(2+) serves as cofactor.

The protein localises to the cytoplasm. It catalyses the reaction tRNA(Met) + L-methionine + ATP = L-methionyl-tRNA(Met) + AMP + diphosphate. Functionally, is required not only for elongation of protein synthesis but also for the initiation of all mRNA translation through initiator tRNA(fMet) aminoacylation. This Bacillus cereus (strain ATCC 10987 / NRS 248) protein is Methionine--tRNA ligase 1.